The chain runs to 304 residues: Protoheme IX farnesyltransferase 1 (304 aa).

Transmembrane regions (helical) follow at residues 24–44 (VVVL…KAPL), 47–67 (FVPW…AGAA), 99–119 (MALG…LAFT), 122–142 (LTAW…TGFL), 150–170 (IVIG…AITG), 176–196 (PLLL…ALCI), 228–248 (LVLF…LVYL), and 280–300 (YSIV…YLPL).

This sequence belongs to the UbiA prenyltransferase family. Protoheme IX farnesyltransferase subfamily.

The protein resides in the cell inner membrane. The catalysed reaction is heme b + (2E,6E)-farnesyl diphosphate + H2O = Fe(II)-heme o + diphosphate. Its pathway is porphyrin-containing compound metabolism; heme O biosynthesis; heme O from protoheme: step 1/1. Its function is as follows. Converts heme B (protoheme IX) to heme O by substitution of the vinyl group on carbon 2 of heme B porphyrin ring with a hydroxyethyl farnesyl side group. This is Protoheme IX farnesyltransferase 1 from Pseudomonas paraeruginosa (strain DSM 24068 / PA7) (Pseudomonas aeruginosa (strain PA7)).